The sequence spans 430 residues: Enolase (430 aa).

Gln-163 provides a ligand contact to (2R)-2-phosphoglycerate. The active-site Proton donor is the Glu-205. Residues Asp-242, Glu-287, and Asp-314 each coordinate Mg(2+). Residues Lys-339, Arg-368, Ser-369, and Lys-390 each coordinate (2R)-2-phosphoglycerate. Catalysis depends on Lys-339, which acts as the Proton acceptor.

This sequence belongs to the enolase family. It depends on Mg(2+) as a cofactor.

Its subcellular location is the cytoplasm. The protein localises to the secreted. The protein resides in the cell surface. The enzyme catalyses (2R)-2-phosphoglycerate = phosphoenolpyruvate + H2O. The protein operates within carbohydrate degradation; glycolysis; pyruvate from D-glyceraldehyde 3-phosphate: step 4/5. Its function is as follows. Catalyzes the reversible conversion of 2-phosphoglycerate (2-PG) into phosphoenolpyruvate (PEP). It is essential for the degradation of carbohydrates via glycolysis. The protein is Enolase of Exiguobacterium sp. (strain ATCC BAA-1283 / AT1b).